Consider the following 252-residue polypeptide: U2 small nuclear ribonucleoprotein A' (252 aa).

LRR repeat units follow at residues 41-62, 63-84, and 87-108; these read PHDAIDFTDNDIQVLGNFPLSP, RIRTLLLARNRIAQIQSTLPNA, and NLKNLVLASNNIGELADLEVLG. The LRRCT domain occupies 121–159; sequence NPVTKKENYRYWVLWLCPQVRFLDYVKVKDAERQKAKEL.

Belongs to the U2 small nuclear ribonucleoprotein A family. In terms of assembly, associated with the spliceosome.

The protein resides in the nucleus. Functionally, involved in pre-mRNA splicing. In Neurospora crassa (strain ATCC 24698 / 74-OR23-1A / CBS 708.71 / DSM 1257 / FGSC 987), this protein is U2 small nuclear ribonucleoprotein A' (lea-1).